Here is an 850-residue protein sequence, read N- to C-terminus: Mitogen-activated protein kinase kinase kinase 11 (850 aa).

Residue S11 is modified to Phosphoserine. Residues 16–35 form a disordered region; that stretch reads WNGSGSGGGGGTGGVRPEGS. Residues 17–31 are compositionally biased toward gly residues; sequence NGSGSGGGGGTGGVR. S35 bears the Phosphoserine mark. In terms of domain architecture, SH3 spans 42 to 106; that stretch reads YANPVWTALF…PSNYVSRGGG (65 aa). The 263-residue stretch at 118 to 380 folds into the Protein kinase domain; it reads LRLEEVIGIG…ASILQQLEAL (263 aa). Residues 124–132 and K145 each bind ATP; that span reads IGIGGFGKV. D242 (proton acceptor) is an active-site residue. The residue at position 278 (T278) is a Phosphothreonine; by autocatalysis. At S282 the chain carries Phosphoserine; by autocatalysis and MAP4K1. A Phosphoserine modification is found at S395. Leucine-zipper regions lie at residues 404 to 425 and 439 to 460; these read IQGL…EEEL and LRRR…ELTL. Residues S508 and S525 each carry the phosphoserine modification. Positions 535 to 644 are disordered; that stretch reads QLEPTESGQT…SSGTPKLIQR (110 aa). Residues 538–547 show a composition bias toward polar residues; sequence PTESGQTWGR. A phosphoserine mark is found at S549, S556, and S557. Positions 551 to 563 are enriched in basic and acidic residues; sequence RRLEDSSNGERRA. Over residues 598–610 the composition is skewed to low complexity; it reads SSPLGSPSTPPAL. A Phosphoserine modification is found at S655. Positions 657-850 are disordered; that stretch reads GLGRDLQPPG…QAPWAPEAGP (194 aa). The segment covering 677–693 has biased composition (pro residues); the sequence is TAPPPAQMPSPCPPELP. Residues 700 to 711 show a composition bias toward polar residues; that stretch reads LSQTTPDAHSSP. Phosphoserine is present on S709. T712 carries the post-translational modification Phosphothreonine. S728, S731, S743, S751, S761, S773, S792, S796, and S818 each carry phosphoserine. The span at 763-776 shows a compositional bias: low complexity; the sequence is PLGLISRPRPSPLR. A compositionally biased stretch (pro residues) spans 790–802; that stretch reads RPSPLPSPQPAPR. Residues 803–819 are compositionally biased toward low complexity; it reads RAPWTLFPDSDPFWDSP.

The protein belongs to the protein kinase superfamily. STE Ser/Thr protein kinase family. MAP kinase kinase kinase subfamily. Homodimer; undergoes dimerization during activation. Interacts with MAP2K4/MKK4 and MAP2K7/MKK7. Found in a complex with SH3RF1, RAC1, MAP2K7/MKK7, MAPK8IP1/JIP1 and MAPK8/JNK1. Requires Mg(2+) as cofactor. In terms of processing, autophosphorylation on serine and threonine residues within the activation loop plays a role in enzyme activation. Thr-278 is likely to be the main autophosphorylation site. Phosphorylation of Ser-556 and Ser-557 is induced by CDC42.

Its subcellular location is the cytoplasm. It is found in the cytoskeleton. The protein localises to the microtubule organizing center. It localises to the centrosome. The catalysed reaction is L-seryl-[protein] + ATP = O-phospho-L-seryl-[protein] + ADP + H(+). It catalyses the reaction L-threonyl-[protein] + ATP = O-phospho-L-threonyl-[protein] + ADP + H(+). Its activity is regulated as follows. Homodimerization via the leucine zipper domains is required for autophosphorylation and subsequent activation. Its function is as follows. Activates the JUN N-terminal pathway. Required for serum-stimulated cell proliferation and for mitogen and cytokine activation of MAPK14 (p38), MAPK3 (ERK) and MAPK8 (JNK1) through phosphorylation and activation of MAP2K4/MKK4 and MAP2K7/MKK7. Plays a role in mitogen-stimulated phosphorylation and activation of BRAF, but does not phosphorylate BRAF directly. Influences microtubule organization during the cell cycle. The polypeptide is Mitogen-activated protein kinase kinase kinase 11 (Map3k11) (Mus musculus (Mouse)).